Consider the following 116-residue polypeptide: UPF0482 protein ECA2253 (116 aa).

The signal sequence occupies residues 1–31 (MNHYSFSSLIRALIPLSLVIVSAVWQPAALA).

It belongs to the UPF0482 family.

This Pectobacterium atrosepticum (strain SCRI 1043 / ATCC BAA-672) (Erwinia carotovora subsp. atroseptica) protein is UPF0482 protein ECA2253.